Consider the following 785-residue polypeptide: Sexual differentiation process protein isp4 (785 aa).

Residues 1–28 (MIGSINESPIEEHMNDSPSTKEKADSVD) are disordered. Residues 10–26 (IEEHMNDSPSTKEKADS) are compositionally biased toward basic and acidic residues. 16 helical membrane passes run 94 to 114 (MWTIGLIYSTVGAAVNMFFSL), 121 to 141 (LSVLISELLAYPALQIWDLIF), 167 to 187 (LIVVMSSVSFGNAYSTDIILA), 196 to 216 (FGFGYEICLTLATQLIGYGLA), 264 to 284 (FFLYVFIASFIWNWFPSYIFQ), 339 to 359 (LMNILLGVILFFWIVTPALNF), 413 to 433 (ALAFGLSFASITSVIFHVILY), 461 to 481 (VPFYWYLSVFLAFFGMMMGTI), 490 to 510 (WWVIIVGVIFSAVWFIPIGIV), 512 to 532 (AITNIQLGLNVFTEFIVGYMY), 537 to 557 (LAMMIFKTVGYITMTQGLAFA), 572 to 592 (IMFYTQMIATIWSCFVQIGVL), 611 to 631 (YTCPNATVFFNSSVIWGVIGP), 642 to 662 (TGLQYFWLAGVLGTILFWALW), 683 to 703 (GYIPPATPVNYLAWSGIGLFF), and 732 to 752 (LSVIILFFCLQLPMVNFPDWW).

It belongs to the oligopeptide OPT transporter family.

It localises to the endoplasmic reticulum membrane. In Schizosaccharomyces pombe (strain 972 / ATCC 24843) (Fission yeast), this protein is Sexual differentiation process protein isp4 (isp4).